Consider the following 140-residue polypeptide: T cell receptor alpha chain constant (140 aa).

The Ig-like C1-type domain maps to Lys-19–Thr-107. A disulfide bond links Cys-22 and Cys-72. N-linked (GlcNAc...) asparagine glycosylation is found at Asn-32, Asn-66, Asn-77, and Asn-113. The tract at residues Cys-94–Ser-115 is connecting peptide. The chain crosses the membrane as a helical span at residues Val-116 to Trp-138. At Ser-139–Ser-140 the chain is on the cytoplasmic side.

In terms of assembly, alpha-beta TR is a heterodimer composed of an alpha and beta chain; disulfide-linked. The alpha-beta TR is associated with the transmembrane signaling CD3 coreceptor proteins to form the TR-CD3 (TcR or TCR). The assembly of alpha-beta TR heterodimers with CD3 occurs in the endoplasmic reticulum where a single alpha-beta TR heterodimer associates with one CD3D-CD3E heterodimer, one CD3G-CD3E heterodimer and one CD247 homodimer forming a stable octameric structure. CD3D-CD3E and CD3G-CD3E heterodimers preferentially associate with TR alpha and TR beta chains, respectively. The association of the CD247 homodimer is the last step of TcR assembly in the endoplasmic reticulum and is required for transport to the cell surface.

It is found in the cell membrane. Functionally, constant region of T cell receptor (TR) alpha chain. Alpha-beta T cell receptors are antigen specific receptors which are essential to the immune response and are present on the cell surface of T lymphocytes. Recognize peptide-major histocompatibility (MH) (pMH) complexes that are displayed by antigen presenting cells (APC), a prerequisite for efficient T cell adaptive immunity against pathogens. Binding of alpha-beta TR to pMH complex initiates TR-CD3 clustering on the cell surface and intracellular activation of LCK that phosphorylates the ITAM motifs of CD3G, CD3D, CD3E and CD247 enabling the recruitment of ZAP70. In turn, ZAP70 phosphorylates LAT, which recruits numerous signaling molecules to form the LAT signalosome. The LAT signalosome propagates signal branching to three major signaling pathways, the calcium, the mitogen-activated protein kinase (MAPK) kinase and the nuclear factor NF-kappa-B (NF-kB) pathways, leading to the mobilization of transcription factors that are critical for gene expression and essential for T cell growth and differentiation. The T cell repertoire is generated in the thymus, by V-(D)-J rearrangement. This repertoire is then shaped by intrathymic selection events to generate a peripheral T cell pool of self-MH restricted, non-autoaggressive T cells. Post-thymic interaction of alpha-beta TR with the pMH complexes shapes TR structural and functional avidity. The protein is T cell receptor alpha chain constant of Homo sapiens (Human).